Consider the following 335-residue polypeptide: 3-isopropylmalate dehydrogenase (335 aa).

Positions 87, 97, 121, and 211 each coordinate substrate. Residues aspartate 211, aspartate 235, and aspartate 239 each coordinate Mg(2+). 271-283 (GSAPDIAGQSKAD) is a binding site for NAD(+).

It belongs to the isocitrate and isopropylmalate dehydrogenases family. LeuB type 2 subfamily. As to quaternary structure, homodimer. Mg(2+) serves as cofactor. Mn(2+) is required as a cofactor.

It is found in the cytoplasm. It catalyses the reaction (2R,3S)-3-isopropylmalate + NAD(+) = 4-methyl-2-oxopentanoate + CO2 + NADH. It functions in the pathway amino-acid biosynthesis; L-leucine biosynthesis; L-leucine from 3-methyl-2-oxobutanoate: step 3/4. Catalyzes the oxidation of 3-carboxy-2-hydroxy-4-methylpentanoate (3-isopropylmalate) to 3-carboxy-4-methyl-2-oxopentanoate. The product decarboxylates to 4-methyl-2 oxopentanoate. The sequence is that of 3-isopropylmalate dehydrogenase from Nocardia farcinica (strain IFM 10152).